The following is a 461-amino-acid chain: MSFDTFYNIITGQPRSARETTSGVNPLDRSSLWPAPVATGNDVEEAVRSAQEAFPAWSEKTYKQRTELLEKFADLYLVHANEFCQLIATECGRTAGNAAIEVYVAAQWLRYPSKYEIPEEVTEDEKKTSIVTHEPLGVVAAICPWNFPLMLALGKIAPALATGNCVILKPSPFTPYSSLKLVELAQQVFPPSVLQVLHGHDDLGPMLVKHPRIQKITFTGSTTTGKQILRDAAETMKRVTLETAGNNASIILPDVNIEAVIPQLAGGLWFNAGQVCIATRRMYIHQDIFDEAVAQLAEASKDLASGMEPIQNEMQLVRLQQALSDANAAGCELLSLGKTEAAEGFFIQPTILKSPPPDADVVQQENFGPIVSCIKFSSLDEAISLANNSDTGLAASVWSSDVSAARRVAAKLEVGNVYINGPPQPDPYVPFGGHKQSGLGVEYGLPGLLSFCQTKSTYLYK.

Gly220 to Gly225 serves as a coordination point for NAD(+). Catalysis depends on residues Glu242 and Cys276.

This sequence belongs to the aldehyde dehydrogenase family.

The catalysed reaction is an aldehyde + NAD(+) + H2O = a carboxylate + NADH + 2 H(+). Functionally, putative aldehyde dehydrogenase; part of the gene cluster that mediates the biosynthesis of the mycotoxin fusarin C. Within the cluster, FUS1, FUS2, FUS8 and FUS9 are sufficient for fusarin production. The other FUS cluster members are not essential for fusarin C biosynthesis. This chain is Putative aldehyde dehydrogenase FUS7, found in Gibberella fujikuroi (strain CBS 195.34 / IMI 58289 / NRRL A-6831) (Bakanae and foot rot disease fungus).